Here is a 77-residue protein sequence, read N- to C-terminus: Small ribosomal subunit protein bS21 (77 aa).

It belongs to the bacterial ribosomal protein bS21 family.

The chain is Small ribosomal subunit protein bS21 from Bartonella tribocorum (strain CIP 105476 / IBS 506).